A 92-amino-acid chain; its full sequence is uncharacterized protein (92 aa).

This is an uncharacterized protein from Archaeoglobus fulgidus (strain ATCC 49558 / DSM 4304 / JCM 9628 / NBRC 100126 / VC-16).